The primary structure comprises 189 residues: UPF0301 protein A1E_00140 (189 aa).

Belongs to the UPF0301 (AlgH) family.

This is UPF0301 protein A1E_00140 from Rickettsia canadensis (strain McKiel).